The primary structure comprises 595 residues: MTMTLHTKASGMALLHQIQGNELEPLSRPQLKMPLERALSEVYVDSSKPAMFNYPEGAAYEFNAATAPAPVYGQTGIAYGSGSEATAFGSNSLGLFPQLNSVSPSPLMLLHPPPPQLSPFLHPHGQQVPYYLENEPSAYAVRDSGPPAFYRSNSDNRRQSGRERLSSSSEKGSMAMESVKETRYCAVCNDYASGYHYGVWSCEGCKAFFKRSIQGHNDYMCPATNQCTIDKNRRKSCQACRLRKCYEVGMMKGGIRKDRRGGRMLKHKRQRDDLEGRNDMGPSGDMRATNLWPSPLVIKHTKKNSPALSLTADQMVSALLDAEPPLIYSEYDPSRPFSEASMMGLLTNLADRELVHMINWAKRVPGFGDLNLHDQVHLLECAWLEILMIGLIWRSMEHPGKLLFAPNLLLDRNQGKCVEGMVEIFDMLLATSARFRMMDLQGEEFVCLKSIILLNSGVYTFLSSTLKSLEEKDHIHRVLDKITDTLIHLMAKAGLTLQQQHRRLAQLLLILSHIRHMSNKGMEHLYNMKCKNVVPFYDLLLEMLDAHRLHTPVSRMGVSPEEPSQSQLTTTNSTSSHSLQTYYIPSEAESFPNTI.

Residues 1-184 form a modulating(transactivation AF-1); mediates interaction with MACROD1 region; the sequence is MTMTLHTKAS…AMESVKETRY (184 aa). O-linked (GlcNAc) serine glycosylation occurs at serine 10. The segment at 35–47 is required for interaction with NCOA1; that stretch reads LERALSEVYVDSS. Positions 35 to 174 are interaction with DDX5; self-association; the sequence is LERALSEVYV…LSSSSEKGSM (140 aa). Phosphoserine; by CDK2 occurs at positions 103 and 105. Serine 118 is subject to Phosphoserine. Residues 143 to 174 are disordered; sequence DSGPPAFYRSNSDNRRQSGRERLSSSSEKGSM. A compositionally biased stretch (basic and acidic residues) spans 154 to 165; sequence SDNRRQSGRERL. A Phosphoserine; by CK2 modification is found at serine 167. 2 NR C4-type zinc fingers span residues 185-205 and 221-245; these read CAVCNDYASGYHYGVWSCEGC and CPATNQCTIDKNRRKSCQACRLRKC. The nuclear receptor DNA-binding region spans 185-250; the sequence is CAVCNDYASG…RLRKCYEVGM (66 aa). A mediates interaction with DNTTIP2 region spans residues 185-310; it reads CAVCNDYASG…TKKNSPALSL (126 aa). The hinge stretch occupies residues 251–310; it reads MKGGIRKDRRGGRMLKHKRQRDDLEGRNDMGPSGDMRATNLWPSPLVIKHTKKNSPALSL. Residue arginine 260 is modified to Asymmetric dimethylarginine; by PRMT1. Basic residues predominate over residues 260-269; that stretch reads RGGRMLKHKR. The interval 260 to 285 is disordered; it reads RGGRMLKHKRQRDDLEGRNDMGPSGD. Residues 262 to 595 form an interaction with AKAP13 region; sequence GRMLKHKRQR…SEAESFPNTI (334 aa). A self-association region spans residues 264–595; the sequence is MLKHKRQRDD…SEAESFPNTI (332 aa). The region spanning 311 to 547 is the NR LBD domain; that stretch reads TADQMVSALL…DLLLEMLDAH (237 aa). The interval 311–595 is transactivation AF-2; that stretch reads TADQMVSALL…SEAESFPNTI (285 aa). 17beta-estradiol is bound by residues glutamate 353 and arginine 394. Residue cysteine 447 is the site of S-palmitoyl cysteine attachment. Histidine 524 is a binding site for 17beta-estradiol. Tyrosine 537 carries the post-translational modification Phosphotyrosine; by Tyr-kinases. The interval 554–578 is disordered; it reads SRMGVSPEEPSQSQLTTTNSTSSHS. The segment covering 564–578 has biased composition (low complexity); the sequence is SQSQLTTTNSTSSHS. Residue threonine 571 is glycosylated (O-linked (GlcNAc) threonine).

It belongs to the nuclear hormone receptor family. NR3 subfamily. As to quaternary structure, binds DNA as a homodimer. Can form a heterodimer with ESR2. Interacts with coactivator NCOA5. Interacts with PELP1, the interaction is enhanced by 17-beta-estradiol; the interaction increases ESR1 transcriptional activity. Interacts with NCOA7; the interaction is ligand-inducible. Interacts with AKAP13, CUEDC2, HEXIM1, KDM5A, MAP1S, SMARD1, and UBE1C. Interacts with MUC1; the interaction is stimulated by 7 beta-estradiol (E2) and enhances ESR1-mediated transcription. Interacts with DNTTIP2, and UIMC1. Interacts with KMT2D/MLL2. Interacts with ATAD2; the interaction is enhanced by estradiol. Interacts with KIF18A and LDB1. Interacts with RLIM (via its C-terminus). Interacts with MACROD1. Interacts with SH2D4A and PLCG. Interacts with SH2D4A; the interaction blocks binding to PLCG and inhibits estrogen-induced cell proliferation. Interacts with DYNLL1. Interacts with CCDC62; the interaction requires estradiol and appears to enhance the transcription of target genes. Interacts with NR2C1; the interaction prevents homodimerization of ESR1 and suppresses its transcriptional activity and cell growth. Interacts with DNAAF4. Interacts with PRMT2. Interacts with RBFOX2. Interacts with EP300; the interaction is estrogen-dependent and enhanced by CITED1. Interacts with CITED1; the interaction is estrogen-dependent. Interacts with FAM120B, FOXL2, PHB2 and SLC30A9. Interacts with coactivators NCOA3 and NCOA6. Interacts with STK3/MST2 only in the presence of SAV1 and vice-versa. Binds to CSNK1D. Interacts with NCOA2; NCOA2 can interact with ESR1 AF-1 and AF-2 domains simultaneously and mediate their transcriptional synergy. Interacts with DDX5. Interacts with NCOA1; the interaction seems to require a self-association of N-terminal and C-terminal regions. Interacts with ZNF366, DDX17, NFKB1, RELA, SP1 and SP3. Interacts with NRIP1. Interacts with GPER1; the interaction occurs in an estrogen-dependent manner. Interacts with CLOCK and the interaction is stimulated by estrogen. Interacts with TRIP4 (ufmylated); estrogen dependent. Interacts with LMTK3; the interaction phosphorylates ESR1 (in vitro) and protects it against proteasomal degradation. Interacts with CCAR2 (via N-terminus) in a ligand-independent manner. Interacts with ZFHX3. Interacts with SFR1 in a ligand-dependent and -independent manner. Interacts with DCAF13, LATS1 and DCAF1; regulates ESR1 ubiquitination and ubiquitin-mediated proteasomal degradation. Interacts (via DNA-binding domain) with POU4F2 (C-terminus); this interaction increases the estrogen receptor ESR1 transcriptional activity in a DNA- and ligand 17-beta-estradiol-independent manner. Interacts with ESRRB isoform 1. Interacts with UBE3A and WBP2. Interacts with GTF2B. Interacts with RBM39. In the absence of hormonal ligand, interacts with TACC1. Interacts with PI3KR1 or PI3KR2 and PTK2/FAK1. Interacts with SRC. Interacts with BAG1; the interaction is promoted in the absence of estradiol (17-beta-estradiol/E2). Interacts with and ubiquitinated by STUB1; the interaction is promoted in the absence of estradiol (17-beta-estradiol/E2). Interacts with NEDD8. Ubiquitinated; regulated by LATS1 via DCAF1 it leads to ESR1 proteasomal degradation. Deubiquitinated by OTUB1. Ubiquitinated by STUB1/CHIP; in the CA1 hippocampal region following loss of endogenous circulating estradiol (17-beta-estradiol/E2). Ubiquitinated by UBR5, leading to its degradation: UBR5 specifically recognizes and binds ligand-bound ESR1 when it is not associated with coactivators (NCOAs). In presence of NCOAs, the UBR5-degron is not accessible, preventing its ubiquitination and degradation. Post-translationally, phosphorylated by cyclin A/CDK2 and CK1. Phosphorylation probably enhances transcriptional activity. Dephosphorylation at Ser-118 by PPP5C inhibits its transactivation activity. Phosphorylated by LMTK3 (in vitro). In terms of processing, palmitoylated at Cys-447 by ZDHHC7 and ZDHHC21. Palmitoylation is required for plasma membrane targeting and for rapid intracellular signaling via ERK and AKT kinases and cAMP generation, but not for signaling mediated by the nuclear hormone receptor. Dimethylated by PRMT1 at Arg-260. The methylation may favor cytoplasmic localization. Demethylated by JMJD6 at Arg-260.

The protein resides in the nucleus. The protein localises to the cytoplasm. It is found in the golgi apparatus. Its subcellular location is the cell membrane. Nuclear hormone receptor. The steroid hormones and their receptors are involved in the regulation of eukaryotic gene expression and affect cellular proliferation and differentiation in target tissues. Ligand-dependent nuclear transactivation involves either direct homodimer binding to a palindromic estrogen response element (ERE) sequence or association with other DNA-binding transcription factors, such as AP-1/c-Jun, c-Fos, ATF-2, Sp1 and Sp3, to mediate ERE-independent signaling. Ligand binding induces a conformational change allowing subsequent or combinatorial association with multiprotein coactivator complexes through LXXLL motifs of their respective components. Mutual transrepression occurs between the estrogen receptor (ER) and NF-kappa-B in a cell-type specific manner. Decreases NF-kappa-B DNA-binding activity and inhibits NF-kappa-B-mediated transcription from the IL6 promoter and displace RELA/p65 and associated coregulators from the promoter. Recruited to the NF-kappa-B response element of the CCL2 and IL8 promoters and can displace CREBBP. Present with NF-kappa-B components RELA/p65 and NFKB1/p50 on ERE sequences. Can also act synergistically with NF-kappa-B to activate transcription involving respective recruitment adjacent response elements; the function involves CREBBP. Can activate the transcriptional activity of TFF1. Also mediates membrane-initiated estrogen signaling involving various kinase cascades. Essential for MTA1-mediated transcriptional regulation of BRCA1 and BCAS3. Maintains neuronal survival in response to ischemic reperfusion injury when in the presence of circulating estradiol (17-beta-estradiol/E2). The sequence is that of Estrogen receptor (ESR1) from Mesocricetus auratus (Golden hamster).